A 112-amino-acid polypeptide reads, in one-letter code: UPF0212 protein Mpal_1084 (112 aa).

It belongs to the UPF0212 family.

This chain is UPF0212 protein Mpal_1084, found in Methanosphaerula palustris (strain ATCC BAA-1556 / DSM 19958 / E1-9c).